We begin with the raw amino-acid sequence, 545 residues long: Chaperonin GroEL 3 (545 aa).

Residues 29–32 (TLGP), 86–90 (DGTTT), G413, 479–481 (DAV), and D495 each bind ATP. The disordered stretch occupies residues 526-545 (DKQAKAPAGVGPGPGEGFDY). A compositionally biased stretch (gly residues) spans 535 to 545 (VGPGPGEGFDY).

This sequence belongs to the chaperonin (HSP60) family. Forms a cylinder of 14 subunits composed of two heptameric rings stacked back-to-back. Interacts with the co-chaperonin GroES.

Its subcellular location is the cytoplasm. The enzyme catalyses ATP + H2O + a folded polypeptide = ADP + phosphate + an unfolded polypeptide.. Together with its co-chaperonin GroES, plays an essential role in assisting protein folding. The GroEL-GroES system forms a nano-cage that allows encapsulation of the non-native substrate proteins and provides a physical environment optimized to promote and accelerate protein folding. This Trichormus variabilis (strain ATCC 29413 / PCC 7937) (Anabaena variabilis) protein is Chaperonin GroEL 3.